The primary structure comprises 317 residues: Acetyl-coenzyme A carboxylase carboxyl transferase subunit alpha (317 aa).

Residues 40 to 293 (LEKRSADALK…GDIIAASLRS (254 aa)) form the CoA carboxyltransferase C-terminal domain.

Belongs to the AccA family. Acetyl-CoA carboxylase is a heterohexamer composed of biotin carboxyl carrier protein (AccB), biotin carboxylase (AccC) and two subunits each of ACCase subunit alpha (AccA) and ACCase subunit beta (AccD).

It localises to the cytoplasm. It carries out the reaction N(6)-carboxybiotinyl-L-lysyl-[protein] + acetyl-CoA = N(6)-biotinyl-L-lysyl-[protein] + malonyl-CoA. It participates in lipid metabolism; malonyl-CoA biosynthesis; malonyl-CoA from acetyl-CoA: step 1/1. Functionally, component of the acetyl coenzyme A carboxylase (ACC) complex. First, biotin carboxylase catalyzes the carboxylation of biotin on its carrier protein (BCCP) and then the CO(2) group is transferred by the carboxyltransferase to acetyl-CoA to form malonyl-CoA. This chain is Acetyl-coenzyme A carboxylase carboxyl transferase subunit alpha, found in Brucella melitensis biotype 2 (strain ATCC 23457).